We begin with the raw amino-acid sequence, 184 residues long: MKLCRCPICHSDIHLEALIEDDAGRELLGKISQLTHGCAQPMVGYLGLFKPAKSNLNNARALKILSEVLDLYPCSLLLAQALSETVASLRKKRQQALQTGQKIEPLTNHNYLKSVYETQKPHFAVIRSGKNQSETVKAQQAEDKKVQDAILYVERFVQLGQEEFVKNSPEYQIWLNHKAQKQAL.

This is an uncharacterized protein from Haemophilus influenzae (strain ATCC 51907 / DSM 11121 / KW20 / Rd).